Reading from the N-terminus, the 560-residue chain is Nibrin homolog (560 aa).

The FHA domain maps to Tyr-25–Gly-87. A BRCT domain is found at Thr-115 to Lys-190.

Belongs to the Nibrin family. Component of the MRN complex composed of two heterodimers RAD50 and MRE11 associated with a single NBS1. As to expression, mostly expressed in the shoot apex and young flower, but also in young leaves, root tips and stamen, tissues where frequent cell division or meiosis may occur.

The protein resides in the nucleus. Its subcellular location is the chromosome. Component of the MRN complex, which plays a central role in double-strand break (DSB) repair, DNA recombination, maintenance of telomere integrity and meiosis. The MRN complex is involved in the repair of DNA double-strand breaks (DSBs) via homologous recombination (HR), an error-free mechanism which primarily occurs during S and G2 phases. The complex (1) mediates the end resection of damaged DNA, which generates proper single-stranded DNA, a key initial steps in HR, and is (2) required for the recruitment of other repair factors and efficient activation of ATM and ATR upon DNA damage. The MRN complex possesses single-strand endonuclease activity and double-strand-specific 3'-5' exonuclease activity, which are provided by MRE11, to initiate end resection, which is required for single-strand invasion and recombination. Within the MRN complex, NBS1 acts as a protein-protein adapter, which specifically recognizes and binds phosphorylated proteins, promoting their recruitment to DNA damage sites. Recruits MRE11 and RAD50 components of the MRN complex to DSBs in response to DNA damage. The chain is Nibrin homolog from Oryza sativa subsp. japonica (Rice).